We begin with the raw amino-acid sequence, 644 residues long: Protein ETHYLENE-INSENSITIVE 3-like 1b (644 aa).

2 disordered regions span residues 47–75 (QCVM…DDDV) and 97–131 (ELQL…KMSR). Residues 66–75 (AGEDDSDDDV) are compositionally biased toward acidic residues.

It belongs to the EIN3 family. As to expression, highly expressed in roots. Expressed at low levels in leaves and panicles.

The protein resides in the nucleus. In terms of biological role, transcription factor acting as a positive regulator in the ethylene response pathway. Involved in wound signaling by binding specifically to the DNA sequence 5'-ATGTACCT-3' found in the promoter of some wound-inducible genes. Binds directly to the DNA sequence 5'-TGTTACAAATACC-3' in the promoter of the GA20OX2 gene to activate its expression at the transcriptional level during ethylene signaling. This is Protein ETHYLENE-INSENSITIVE 3-like 1b from Oryza sativa subsp. japonica (Rice).